The chain runs to 338 residues: Ketol-acid reductoisomerase (NADP(+)) (338 aa).

The KARI N-terminal Rossmann domain maps to 1 to 181 (MRVFYDKDCD…GGGRTGIIET (181 aa)). NADP(+)-binding positions include 24-27 (YGSQ), Arg47, Ser50, Thr52, and 82-85 (DEFQ). The active site involves His107. Gly133 is a binding site for NADP(+). Residues 182–327 (TFKDETETDL…EKLRAMMPWI (146 aa)) form the KARI C-terminal knotted domain. Positions 190, 194, 226, and 230 each coordinate Mg(2+). Ser251 contacts substrate.

It belongs to the ketol-acid reductoisomerase family. The cofactor is Mg(2+).

It catalyses the reaction (2R)-2,3-dihydroxy-3-methylbutanoate + NADP(+) = (2S)-2-acetolactate + NADPH + H(+). It carries out the reaction (2R,3R)-2,3-dihydroxy-3-methylpentanoate + NADP(+) = (S)-2-ethyl-2-hydroxy-3-oxobutanoate + NADPH + H(+). Its pathway is amino-acid biosynthesis; L-isoleucine biosynthesis; L-isoleucine from 2-oxobutanoate: step 2/4. It participates in amino-acid biosynthesis; L-valine biosynthesis; L-valine from pyruvate: step 2/4. Its function is as follows. Involved in the biosynthesis of branched-chain amino acids (BCAA). Catalyzes an alkyl-migration followed by a ketol-acid reduction of (S)-2-acetolactate (S2AL) to yield (R)-2,3-dihydroxy-isovalerate. In the isomerase reaction, S2AL is rearranged via a Mg-dependent methyl migration to produce 3-hydroxy-3-methyl-2-ketobutyrate (HMKB). In the reductase reaction, this 2-ketoacid undergoes a metal-dependent reduction by NADPH to yield (R)-2,3-dihydroxy-isovalerate. The sequence is that of Ketol-acid reductoisomerase (NADP(+)) from Pseudomonas paraeruginosa (strain DSM 24068 / PA7) (Pseudomonas aeruginosa (strain PA7)).